Consider the following 458-residue polypeptide: Ectonucleotide pyrophosphatase/phosphodiesterase family member 7 (458 aa).

The first 21 residues, 1-21, serve as a signal peptide directing secretion; the sequence is MRGPAVLLTVALATLLAPGAG. At 22–433 the chain is on the extracellular side; it reads APVQSQGSQN…RPTLLPKGRS (412 aa). Residues aspartate 39 and threonine 75 each contribute to the Zn(2+) site. A required for enzyme activity region spans residues 72-78; the sequence is VTMTSPC. Residue threonine 75 is the Nucleophile of the active site. Asparagine 96 is a binding site for substrate. 4 N-linked (GlcNAc...) asparagine glycosylation sites follow: asparagine 100, asparagine 121, asparagine 146, and asparagine 168. 4 residues coordinate Zn(2+): aspartate 199, histidine 203, aspartate 246, and histidine 247. Asparagine 267 carries an N-linked (GlcNAc...) asparagine glycan. Histidine 353 is a binding site for Zn(2+). The helical transmembrane segment at 434 to 454 threads the bilayer; it reads ALPPSSRPLLVMGLLGTVILL. Residues 455-458 lie on the Cytoplasmic side of the membrane; sequence SEVA.

The protein belongs to the nucleotide pyrophosphatase/phosphodiesterase family. It depends on Zn(2+) as a cofactor. N-glycosylated; required for activity and transport to the plasma membrane. In terms of tissue distribution, detected in the colon (at protein level). Expressed in the duodenum, jejunum and liver and at low levels in the ileum. Expression was very low in the esophagus, stomach and colon.

It localises to the cell membrane. It catalyses the reaction a sphingomyelin + H2O = phosphocholine + an N-acylsphing-4-enine + H(+). It carries out the reaction 1-hexadecanoyl-sn-glycero-3-phosphocholine + H2O = 1-hexadecanoyl-sn-glycerol + phosphocholine + H(+). The catalysed reaction is a 1-O-alkyl-2-acetyl-sn-glycero-3-phosphocholine + H2O = a 1-O-alkyl-2-acetyl-sn-glycerol + phosphocholine + H(+). The enzyme catalyses 1-O-octadecyl-2-acetyl-sn-glycero-3-phosphocholine + H2O = 1-O-octadecyl-2-acetyl-sn-glycerol + phosphocholine + H(+). Its activity is regulated as follows. Inhibited in a dose dependent manner by ATP, imidazole, orthovanadate and zinc ion. Not inhibited by ADP, AMP and EDTA. Functionally, choline-specific phosphodiesterase that hydrolyzes sphingomyelin releasing the ceramide and phosphocholine and therefore is involved in sphingomyelin digestion, ceramide formation, and fatty acid (FA) absorption in the gastrointestinal tract. Also has phospholipase C activity and can also cleave phosphocholine from palmitoyl lyso-phosphatidylcholine and platelet-activating factor (PAF) leading to its inactivation. Does not have nucleotide pyrophosphatase activity. May promote cholesterol absorption by affecting the levels of sphingomyelin derived from either diet or endogenous sources, in the intestinal lumen. The sequence is that of Ectonucleotide pyrophosphatase/phosphodiesterase family member 7 from Homo sapiens (Human).